A 58-amino-acid polypeptide reads, in one-letter code: Large ribosomal subunit protein uL30 (58 aa).

This sequence belongs to the universal ribosomal protein uL30 family. In terms of assembly, part of the 50S ribosomal subunit.

This Vibrio campbellii (strain ATCC BAA-1116) protein is Large ribosomal subunit protein uL30.